A 158-amino-acid polypeptide reads, in one-letter code: NAD(P)H-quinone oxidoreductase subunit J, chloroplastic (158 aa).

The protein belongs to the complex I 30 kDa subunit family. In terms of assembly, NDH is composed of at least 16 different subunits, 5 of which are encoded in the nucleus.

The protein resides in the plastid. Its subcellular location is the chloroplast thylakoid membrane. The catalysed reaction is a plastoquinone + NADH + (n+1) H(+)(in) = a plastoquinol + NAD(+) + n H(+)(out). It catalyses the reaction a plastoquinone + NADPH + (n+1) H(+)(in) = a plastoquinol + NADP(+) + n H(+)(out). Functionally, NDH shuttles electrons from NAD(P)H:plastoquinone, via FMN and iron-sulfur (Fe-S) centers, to quinones in the photosynthetic chain and possibly in a chloroplast respiratory chain. The immediate electron acceptor for the enzyme in this species is believed to be plastoquinone. Couples the redox reaction to proton translocation, and thus conserves the redox energy in a proton gradient. The sequence is that of NAD(P)H-quinone oxidoreductase subunit J, chloroplastic from Piper cenocladum (Ant piper).